The chain runs to 328 residues: DNA-directed RNA polymerase subunit alpha (328 aa).

An alpha N-terminal domain (alpha-NTD) region spans residues 1–231; sequence MIYQMQMPER…EHVSLFANFS (231 aa). The interval 252 to 328 is alpha C-terminal domain (alpha-CTD); that stretch reads MRKLLQTRIE…MDITKYQMKS (77 aa).

It belongs to the RNA polymerase alpha chain family. As to quaternary structure, homodimer. The RNAP catalytic core consists of 2 alpha, 1 beta, 1 beta' and 1 omega subunit. When a sigma factor is associated with the core the holoenzyme is formed, which can initiate transcription.

It carries out the reaction RNA(n) + a ribonucleoside 5'-triphosphate = RNA(n+1) + diphosphate. In terms of biological role, DNA-dependent RNA polymerase catalyzes the transcription of DNA into RNA using the four ribonucleoside triphosphates as substrates. The chain is DNA-directed RNA polymerase subunit alpha from Prosthecochloris aestuarii (strain DSM 271 / SK 413).